The sequence spans 189 residues: Probable nicotinate-nucleotide adenylyltransferase (189 aa).

Belongs to the NadD family.

The catalysed reaction is nicotinate beta-D-ribonucleotide + ATP + H(+) = deamido-NAD(+) + diphosphate. It participates in cofactor biosynthesis; NAD(+) biosynthesis; deamido-NAD(+) from nicotinate D-ribonucleotide: step 1/1. In terms of biological role, catalyzes the reversible adenylation of nicotinate mononucleotide (NaMN) to nicotinic acid adenine dinucleotide (NaAD). This chain is Probable nicotinate-nucleotide adenylyltransferase, found in Ruegeria sp. (strain TM1040) (Silicibacter sp.).